A 197-amino-acid chain; its full sequence is Pyridoxal 5'-phosphate synthase subunit PdxT (197 aa).

54–56 (GES) provides a ligand contact to L-glutamine. The active-site Nucleophile is the cysteine 86. Residues arginine 113 and 141-142 (IR) contribute to the L-glutamine site. Active-site charge relay system residues include histidine 177 and glutamate 179.

This sequence belongs to the glutaminase PdxT/SNO family. In terms of assembly, in the presence of PdxS, forms a dodecamer of heterodimers. Only shows activity in the heterodimer.

The catalysed reaction is aldehydo-D-ribose 5-phosphate + D-glyceraldehyde 3-phosphate + L-glutamine = pyridoxal 5'-phosphate + L-glutamate + phosphate + 3 H2O + H(+). It catalyses the reaction L-glutamine + H2O = L-glutamate + NH4(+). The protein operates within cofactor biosynthesis; pyridoxal 5'-phosphate biosynthesis. Catalyzes the hydrolysis of glutamine to glutamate and ammonia as part of the biosynthesis of pyridoxal 5'-phosphate. The resulting ammonia molecule is channeled to the active site of PdxS. The polypeptide is Pyridoxal 5'-phosphate synthase subunit PdxT (Haloarcula marismortui (strain ATCC 43049 / DSM 3752 / JCM 8966 / VKM B-1809) (Halobacterium marismortui)).